Reading from the N-terminus, the 136-residue chain is Large ribosomal subunit protein bL20 (136 aa).

The protein belongs to the bacterial ribosomal protein bL20 family.

Binds directly to 23S ribosomal RNA and is necessary for the in vitro assembly process of the 50S ribosomal subunit. It is not involved in the protein synthesizing functions of that subunit. The chain is Large ribosomal subunit protein bL20 from Tropheryma whipplei (strain Twist) (Whipple's bacillus).